Consider the following 393-residue polypeptide: Formate-dependent phosphoribosylglycinamide formyltransferase (393 aa).

N(1)-(5-phospho-beta-D-ribosyl)glycinamide is bound by residues 22-23 (EL) and Glu-82. ATP-binding positions include Arg-114, Lys-155, 160–165 (SSGKGQ), 195–198 (ESFV), and Glu-203. One can recognise an ATP-grasp domain in the interval 119-308 (RLAAEEVGLK…EFALHVRAIL (190 aa)). Mg(2+) contacts are provided by Glu-267 and Glu-279. N(1)-(5-phospho-beta-D-ribosyl)glycinamide is bound by residues Asp-286, Lys-356, and 363–364 (RR).

Belongs to the PurK/PurT family. As to quaternary structure, homodimer.

The enzyme catalyses N(1)-(5-phospho-beta-D-ribosyl)glycinamide + formate + ATP = N(2)-formyl-N(1)-(5-phospho-beta-D-ribosyl)glycinamide + ADP + phosphate + H(+). It participates in purine metabolism; IMP biosynthesis via de novo pathway; N(2)-formyl-N(1)-(5-phospho-D-ribosyl)glycinamide from N(1)-(5-phospho-D-ribosyl)glycinamide (formate route): step 1/1. Functionally, involved in the de novo purine biosynthesis. Catalyzes the transfer of formate to 5-phospho-ribosyl-glycinamide (GAR), producing 5-phospho-ribosyl-N-formylglycinamide (FGAR). Formate is provided by PurU via hydrolysis of 10-formyl-tetrahydrofolate. This Maridesulfovibrio salexigens (strain ATCC 14822 / DSM 2638 / NCIMB 8403 / VKM B-1763) (Desulfovibrio salexigens) protein is Formate-dependent phosphoribosylglycinamide formyltransferase.